Consider the following 990-residue polypeptide: Bifunctional glutamine synthetase adenylyltransferase/adenylyl-removing enzyme (990 aa).

Residues 1 to 474 form an adenylyl removase region; sequence MPTDNENSMT…HFNELVEESQ (474 aa). Residues 484–990 form an adenylyl transferase region; it reads FIACQDAWRL…WDTLFGTCSE (507 aa).

This sequence belongs to the GlnE family. It depends on Mg(2+) as a cofactor.

It catalyses the reaction [glutamine synthetase]-O(4)-(5'-adenylyl)-L-tyrosine + phosphate = [glutamine synthetase]-L-tyrosine + ADP. The catalysed reaction is [glutamine synthetase]-L-tyrosine + ATP = [glutamine synthetase]-O(4)-(5'-adenylyl)-L-tyrosine + diphosphate. Its function is as follows. Involved in the regulation of glutamine synthetase GlnA, a key enzyme in the process to assimilate ammonia. When cellular nitrogen levels are high, the C-terminal adenylyl transferase (AT) inactivates GlnA by covalent transfer of an adenylyl group from ATP to specific tyrosine residue of GlnA, thus reducing its activity. Conversely, when nitrogen levels are low, the N-terminal adenylyl removase (AR) activates GlnA by removing the adenylyl group by phosphorolysis, increasing its activity. The regulatory region of GlnE binds the signal transduction protein PII (GlnB) which indicates the nitrogen status of the cell. The protein is Bifunctional glutamine synthetase adenylyltransferase/adenylyl-removing enzyme of Alteromonas mediterranea (strain DSM 17117 / CIP 110805 / LMG 28347 / Deep ecotype).